Consider the following 401-residue polypeptide: L-methionine gamma-lyase (401 aa).

Residues 59–61 and 89–90 contribute to the pyridoxal 5'-phosphate site; these read YTR and GI. Residue Y114 coordinates substrate. 210 to 212 contributes to the pyridoxal 5'-phosphate binding site; it reads SAT. The residue at position 213 (K213) is an N6-(pyridoxal phosphate)lysine. R377 provides a ligand contact to substrate.

This sequence belongs to the trans-sulfuration enzymes family. L-methionine gamma-lyase subfamily. In terms of assembly, homotetramer; dimer of active dimers. Pyridoxal 5'-phosphate is required as a cofactor.

It catalyses the reaction L-methionine + H2O = methanethiol + 2-oxobutanoate + NH4(+). The catalysed reaction is L-homocysteine + H2O = 2-oxobutanoate + hydrogen sulfide + NH4(+) + H(+). Functionally, catalyzes the alpha,gamma-elimination of L-methionine to produce methanethiol, 2-oxobutanoate and ammonia; methanethiol (methyl mercaptan) is considered to be one of the main causes of the oral malodor associated with periodontitis and may also play a role in the pathogenicity of T.denticola. Also displays homocysteine desulfhydrase activity, degrading homocysteine to produce hydrogen sulfide, 2-oxobutanoate and ammonia. The protein is L-methionine gamma-lyase of Treponema denticola (strain ATCC 35405 / DSM 14222 / CIP 103919 / JCM 8153 / KCTC 15104).